The following is a 324-amino-acid chain: Beta-ketoacyl-[acyl-carrier-protein] synthase III (324 aa).

Residues C112 and H249 contribute to the active site. An ACP-binding region spans residues 250–254 (QANDR). The active site involves N279.

It belongs to the thiolase-like superfamily. FabH family. As to quaternary structure, homodimer.

It is found in the cytoplasm. It catalyses the reaction malonyl-[ACP] + acetyl-CoA + H(+) = 3-oxobutanoyl-[ACP] + CO2 + CoA. It functions in the pathway lipid metabolism; fatty acid biosynthesis. In terms of biological role, catalyzes the condensation reaction of fatty acid synthesis by the addition to an acyl acceptor of two carbons from malonyl-ACP. Catalyzes the first condensation reaction which initiates fatty acid synthesis and may therefore play a role in governing the total rate of fatty acid production. Possesses both acetoacetyl-ACP synthase and acetyl transacylase activities. Its substrate specificity determines the biosynthesis of branched-chain and/or straight-chain of fatty acids. The protein is Beta-ketoacyl-[acyl-carrier-protein] synthase III of Streptococcus gordonii (strain Challis / ATCC 35105 / BCRC 15272 / CH1 / DL1 / V288).